The primary structure comprises 76 residues: MLAPALTHVVKGIVDHPDDVRVVAKSSPRGEVLEVRVNPEDLGRVIGRSGRTAKALRTLVTALADGRRVRVDVVDD.

The region spanning 30–76 is the KH domain; that stretch reads GEVLEVRVNPEDLGRVIGRSGRTAKALRTLVTALADGRRVRVDVVDD.

This sequence belongs to the KhpA RNA-binding protein family.

The protein localises to the cytoplasm. In terms of biological role, a probable RNA-binding protein. This is RNA-binding protein KhpA from Leifsonia xyli subsp. xyli (strain CTCB07).